Consider the following 82-residue polypeptide: Small ribosomal subunit protein bS16 (82 aa).

The protein belongs to the bacterial ribosomal protein bS16 family.

In Yersinia pseudotuberculosis serotype O:1b (strain IP 31758), this protein is Small ribosomal subunit protein bS16.